The primary structure comprises 66 residues: Small ribosomal subunit protein bS21 (66 aa).

This sequence belongs to the bacterial ribosomal protein bS21 family.

The chain is Small ribosomal subunit protein bS21 from Bdellovibrio bacteriovorus (strain ATCC 15356 / DSM 50701 / NCIMB 9529 / HD100).